Consider the following 263-residue polypeptide: Indole-3-glycerol phosphate synthase (263 aa).

This sequence belongs to the TrpC family.

It catalyses the reaction 1-(2-carboxyphenylamino)-1-deoxy-D-ribulose 5-phosphate + H(+) = (1S,2R)-1-C-(indol-3-yl)glycerol 3-phosphate + CO2 + H2O. Its pathway is amino-acid biosynthesis; L-tryptophan biosynthesis; L-tryptophan from chorismate: step 4/5. The polypeptide is Indole-3-glycerol phosphate synthase (Rhodospirillum rubrum (strain ATCC 11170 / ATH 1.1.1 / DSM 467 / LMG 4362 / NCIMB 8255 / S1)).